A 344-amino-acid chain; its full sequence is WW domain binding protein 1-like (344 aa).

A helical membrane pass occupies residues leucine 42 to histidine 62. Disordered stretches follow at residues leucine 132–glycine 250 and cysteine 302–proline 321. Residues proline 145–serine 173 are compositionally biased toward low complexity. Serine 173 is modified (phosphoserine). Basic and acidic residues predominate over residues leucine 212 to serine 228.

The protein resides in the membrane. In Rattus norvegicus (Rat), this protein is WW domain binding protein 1-like (Wbp1l).